A 430-amino-acid chain; its full sequence is Isocitrate dehydrogenase [NADP], mitochondrial (430 aa).

A mitochondrion-targeting transit peptide spans 1–27 (MIRASAIQRTAMLLRQLRGFSTSATLA). NADP(+)-binding positions include 101–103 (TIT) and arginine 108. Position 103 (threonine 103) interacts with substrate. Substrate is bound by residues 120–126 (SPNGTIR), arginine 135, and arginine 158. Aspartate 277 is a binding site for Mn(2+). Residue lysine 285 coordinates NADP(+). Position 300 (aspartate 300) interacts with Mn(2+). Residues 335 to 340 (GTVTRH) and asparagine 353 each bind NADP(+).

The protein belongs to the isocitrate and isopropylmalate dehydrogenases family. Homodimer. Mg(2+) serves as cofactor. Mn(2+) is required as a cofactor.

It localises to the mitochondrion. It catalyses the reaction D-threo-isocitrate + NADP(+) = 2-oxoglutarate + CO2 + NADPH. Its function is as follows. Mitochondrial IDP1 may regulate flux through the tricarboxylic acid cycle and respiration. Its probably critical function is the production of NADPH. The sequence is that of Isocitrate dehydrogenase [NADP], mitochondrial (IDP1) from Candida tropicalis (Yeast).